Reading from the N-terminus, the 163-residue chain is Disulfide bond formation protein B (163 aa).

At 1–9 (MKKLTYRKI) the chain is on the cytoplasmic side. Residues 10-26 (QSFQAIITVLVIFASFY) traverse the membrane as a helical segment. Over 27–44 (LEYAAGLQPCPLCLMQRV) the chain is Periplasmic. Cys-36 and Cys-39 form a disulfide bridge. Residues 45–58 (CVFILLGLMGVSLG) traverse the membrane as a helical segment. The Cytoplasmic segment spans residues 59–64 (TVKKAH). A helical transmembrane segment spans residues 65–82 (IVSLIQFQVACAGLYFSL). Topologically, residues 83-139 (RQLWLQSLPSDQAPACMPGLDVLIQYFPWQTVAKALFWGAGDCAEVTWTMFGVSMPG) are periplasmic. Cys-98 and Cys-125 are joined by a disulfide. A helical membrane pass occupies residues 140-158 (WAAMYFLSMAIMGLFLFFR). The Cytoplasmic segment spans residues 159 to 163 (TRTIN).

Belongs to the DsbB family.

The protein localises to the cell inner membrane. Its function is as follows. Required for disulfide bond formation in some periplasmic proteins. Acts by oxidizing the DsbA protein. The chain is Disulfide bond formation protein B from Legionella pneumophila (strain Lens).